The sequence spans 349 residues: Carbamoyl phosphate synthase small chain (349 aa).

The interval 1–170 is CPSase; the sequence is MKAKLILENG…KYEISGEGKK (170 aa). 3 residues coordinate L-glutamine: serine 45, glycine 218, and glycine 220. The Glutamine amidotransferase type-1 domain maps to 170 to 349; it reads KVAIIDFGIK…IFDEFMKYAL (180 aa). Cysteine 245 acts as the Nucleophile in catalysis. Residues leucine 246, glutamine 249, asparagine 287, glycine 289, and tyrosine 290 each coordinate L-glutamine. Residues histidine 327 and glutamate 329 contribute to the active site.

Belongs to the CarA family. In terms of assembly, composed of two chains; the small (or glutamine) chain promotes the hydrolysis of glutamine to ammonia, which is used by the large (or ammonia) chain to synthesize carbamoyl phosphate. Tetramer of heterodimers (alpha,beta)4.

The enzyme catalyses hydrogencarbonate + L-glutamine + 2 ATP + H2O = carbamoyl phosphate + L-glutamate + 2 ADP + phosphate + 2 H(+). It carries out the reaction L-glutamine + H2O = L-glutamate + NH4(+). It participates in amino-acid biosynthesis; L-arginine biosynthesis; carbamoyl phosphate from bicarbonate: step 1/1. Its pathway is pyrimidine metabolism; UMP biosynthesis via de novo pathway; (S)-dihydroorotate from bicarbonate: step 1/3. Its function is as follows. Small subunit of the glutamine-dependent carbamoyl phosphate synthetase (CPSase). CPSase catalyzes the formation of carbamoyl phosphate from the ammonia moiety of glutamine, carbonate, and phosphate donated by ATP, constituting the first step of 2 biosynthetic pathways, one leading to arginine and/or urea and the other to pyrimidine nucleotides. The small subunit (glutamine amidotransferase) binds and cleaves glutamine to supply the large subunit with the substrate ammonia. This is Carbamoyl phosphate synthase small chain from Clostridium perfringens (strain 13 / Type A).